A 179-amino-acid polypeptide reads, in one-letter code: Nucleoside-triphosphatase THEP1 (179 aa).

ATP is bound by residues 7–14 and 94–101; these read GRPGVGKT and LIIVDEIG.

Belongs to the THEP1 NTPase family.

It carries out the reaction a ribonucleoside 5'-triphosphate + H2O = a ribonucleoside 5'-diphosphate + phosphate + H(+). In terms of biological role, has nucleotide phosphatase activity towards ATP, GTP, CTP, TTP and UTP. May hydrolyze nucleoside diphosphates with lower efficiency. This is Nucleoside-triphosphatase THEP1 from Thermotoga petrophila (strain ATCC BAA-488 / DSM 13995 / JCM 10881 / RKU-1).